A 666-amino-acid chain; its full sequence is DNA mismatch repair protein MutL (666 aa).

It belongs to the DNA mismatch repair MutL/HexB family.

This protein is involved in the repair of mismatches in DNA. It is required for dam-dependent methyl-directed DNA mismatch repair. May act as a 'molecular matchmaker', a protein that promotes the formation of a stable complex between two or more DNA-binding proteins in an ATP-dependent manner without itself being part of a final effector complex. This Clostridium botulinum (strain 657 / Type Ba4) protein is DNA mismatch repair protein MutL.